A 72-amino-acid polypeptide reads, in one-letter code: Translation initiation factor IF-1 (72 aa).

One can recognise an S1-like domain in the interval 1-72 (MAKDDVIQMQ…SRARIVFRTK (72 aa)).

This sequence belongs to the IF-1 family. Component of the 30S ribosomal translation pre-initiation complex which assembles on the 30S ribosome in the order IF-2 and IF-3, IF-1 and N-formylmethionyl-tRNA(fMet); mRNA recruitment can occur at any time during PIC assembly.

Its subcellular location is the cytoplasm. Its function is as follows. One of the essential components for the initiation of protein synthesis. Stabilizes the binding of IF-2 and IF-3 on the 30S subunit to which N-formylmethionyl-tRNA(fMet) subsequently binds. Helps modulate mRNA selection, yielding the 30S pre-initiation complex (PIC). Upon addition of the 50S ribosomal subunit IF-1, IF-2 and IF-3 are released leaving the mature 70S translation initiation complex. In Herminiimonas arsenicoxydans, this protein is Translation initiation factor IF-1.